A 160-amino-acid polypeptide reads, in one-letter code: Sec-independent protein translocase protein TatB (160 aa).

Residues 1–21 (MIDLGVSKIALIGAVALIVIG) traverse the membrane as a helical segment. Disordered regions lie at residues 70 to 100 (ARDVETSIQTSASDFEKSWSDATGSDASTAT) and 133 to 160 (RSGVRTKAQSGAARVARFRPQSGRSSSF). Over residues 89–100 (SDATGSDASTAT) the composition is skewed to polar residues.

This sequence belongs to the TatB family. In terms of assembly, the Tat system comprises two distinct complexes: a TatABC complex, containing multiple copies of TatA, TatB and TatC subunits, and a separate TatA complex, containing only TatA subunits. Substrates initially bind to the TatABC complex, which probably triggers association of the separate TatA complex to form the active translocon.

It is found in the cell inner membrane. Its function is as follows. Part of the twin-arginine translocation (Tat) system that transports large folded proteins containing a characteristic twin-arginine motif in their signal peptide across membranes. Together with TatC, TatB is part of a receptor directly interacting with Tat signal peptides. TatB may form an oligomeric binding site that transiently accommodates folded Tat precursor proteins before their translocation. This chain is Sec-independent protein translocase protein TatB, found in Polaromonas sp. (strain JS666 / ATCC BAA-500).